A 72-amino-acid chain; its full sequence is Translation initiation factor IF-1 (72 aa).

The region spanning 1–72 is the S1-like domain; it reads MAKEDSIEMQ…TKGRIVFRAR (72 aa).

This sequence belongs to the IF-1 family. Component of the 30S ribosomal translation pre-initiation complex which assembles on the 30S ribosome in the order IF-2 and IF-3, IF-1 and N-formylmethionyl-tRNA(fMet); mRNA recruitment can occur at any time during PIC assembly.

Its subcellular location is the cytoplasm. In terms of biological role, one of the essential components for the initiation of protein synthesis. Stabilizes the binding of IF-2 and IF-3 on the 30S subunit to which N-formylmethionyl-tRNA(fMet) subsequently binds. Helps modulate mRNA selection, yielding the 30S pre-initiation complex (PIC). Upon addition of the 50S ribosomal subunit IF-1, IF-2 and IF-3 are released leaving the mature 70S translation initiation complex. In Shewanella amazonensis (strain ATCC BAA-1098 / SB2B), this protein is Translation initiation factor IF-1.